Here is a 346-residue protein sequence, read N- to C-terminus: Small ribosomal subunit biogenesis GTPase RsgA 1 (346 aa).

The 156-residue stretch at 93–248 (EEQLIAANFD…IIDTPGMREF (156 aa)) folds into the CP-type G domain. Residues 138-141 (TKAD) and 190-198 (GSSGVGKSS) contribute to the GTP site. Zn(2+)-binding residues include Cys271, Cys276, His278, and Cys284.

The protein belongs to the TRAFAC class YlqF/YawG GTPase family. RsgA subfamily. In terms of assembly, monomer. Associates with 30S ribosomal subunit, binds 16S rRNA. Zn(2+) is required as a cofactor.

The protein resides in the cytoplasm. One of several proteins that assist in the late maturation steps of the functional core of the 30S ribosomal subunit. Helps release RbfA from mature subunits. May play a role in the assembly of ribosomal proteins into the subunit. Circularly permuted GTPase that catalyzes slow GTP hydrolysis, GTPase activity is stimulated by the 30S ribosomal subunit. This is Small ribosomal subunit biogenesis GTPase RsgA 1 from Listeria innocua serovar 6a (strain ATCC BAA-680 / CLIP 11262).